The primary structure comprises 254 residues: Nickel import ATP-binding protein NikD (254 aa).

The ABC transporter domain occupies 2-241; it reads PQQIELRNIT…PKHTVTRSLV (240 aa). An ATP-binding site is contributed by 36–43; the sequence is GGSGSGKS.

Belongs to the ABC transporter superfamily. Nickel importer (TC 3.A.1.5.3) family. In terms of assembly, the complex is composed of two ATP-binding proteins (NikD and NikE), two transmembrane proteins (NikB and NikC) and a solute-binding protein (NikA).

The protein localises to the cell inner membrane. It catalyses the reaction Ni(2+)(out) + ATP + H2O = Ni(2+)(in) + ADP + phosphate + H(+). In terms of biological role, part of the ABC transporter complex NikABCDE involved in nickel import. Responsible for energy coupling to the transport system. The chain is Nickel import ATP-binding protein NikD from Shigella flexneri.